Here is a 342-residue protein sequence, read N- to C-terminus: S-adenosylmethionine:tRNA ribosyltransferase-isomerase (342 aa).

The protein belongs to the QueA family. In terms of assembly, monomer.

The protein localises to the cytoplasm. The enzyme catalyses 7-aminomethyl-7-carbaguanosine(34) in tRNA + S-adenosyl-L-methionine = epoxyqueuosine(34) in tRNA + adenine + L-methionine + 2 H(+). It participates in tRNA modification; tRNA-queuosine biosynthesis. Its function is as follows. Transfers and isomerizes the ribose moiety from AdoMet to the 7-aminomethyl group of 7-deazaguanine (preQ1-tRNA) to give epoxyqueuosine (oQ-tRNA). The polypeptide is S-adenosylmethionine:tRNA ribosyltransferase-isomerase (Campylobacter jejuni (strain RM1221)).